The chain runs to 264 residues: 3-methyl-2-oxobutanoate hydroxymethyltransferase (264 aa).

Mg(2+)-binding residues include aspartate 45 and aspartate 84. 3-methyl-2-oxobutanoate contacts are provided by residues 45 to 46 (DS), aspartate 84, and lysine 112. Residue glutamate 114 participates in Mg(2+) binding. The Proton acceptor role is filled by glutamate 181.

The protein belongs to the PanB family. In terms of assembly, homodecamer; pentamer of dimers. It depends on Mg(2+) as a cofactor.

It localises to the cytoplasm. It catalyses the reaction 3-methyl-2-oxobutanoate + (6R)-5,10-methylene-5,6,7,8-tetrahydrofolate + H2O = 2-dehydropantoate + (6S)-5,6,7,8-tetrahydrofolate. Its pathway is cofactor biosynthesis; (R)-pantothenate biosynthesis; (R)-pantoate from 3-methyl-2-oxobutanoate: step 1/2. In terms of biological role, catalyzes the reversible reaction in which hydroxymethyl group from 5,10-methylenetetrahydrofolate is transferred onto alpha-ketoisovalerate to form ketopantoate. This is 3-methyl-2-oxobutanoate hydroxymethyltransferase from Vibrio campbellii (strain ATCC BAA-1116).